The chain runs to 151 residues: D-aminoacyl-tRNA deacylase (151 aa).

The short motif at 142–143 (GP) is the Gly-cisPro motif, important for rejection of L-amino acids element.

Belongs to the DTD family. As to quaternary structure, homodimer.

The protein resides in the cytoplasm. It catalyses the reaction glycyl-tRNA(Ala) + H2O = tRNA(Ala) + glycine + H(+). The catalysed reaction is a D-aminoacyl-tRNA + H2O = a tRNA + a D-alpha-amino acid + H(+). Its function is as follows. An aminoacyl-tRNA editing enzyme that deacylates mischarged D-aminoacyl-tRNAs. Also deacylates mischarged glycyl-tRNA(Ala), protecting cells against glycine mischarging by AlaRS. Acts via tRNA-based rather than protein-based catalysis; rejects L-amino acids rather than detecting D-amino acids in the active site. By recycling D-aminoacyl-tRNA to D-amino acids and free tRNA molecules, this enzyme counteracts the toxicity associated with the formation of D-aminoacyl-tRNA entities in vivo and helps enforce protein L-homochirality. This is D-aminoacyl-tRNA deacylase from Psychrobacter cryohalolentis (strain ATCC BAA-1226 / DSM 17306 / VKM B-2378 / K5).